The chain runs to 338 residues: S-adenosylmethionine:tRNA ribosyltransferase-isomerase (338 aa).

This sequence belongs to the QueA family. In terms of assembly, monomer.

It is found in the cytoplasm. It catalyses the reaction 7-aminomethyl-7-carbaguanosine(34) in tRNA + S-adenosyl-L-methionine = epoxyqueuosine(34) in tRNA + adenine + L-methionine + 2 H(+). Its pathway is tRNA modification; tRNA-queuosine biosynthesis. Its function is as follows. Transfers and isomerizes the ribose moiety from AdoMet to the 7-aminomethyl group of 7-deazaguanine (preQ1-tRNA) to give epoxyqueuosine (oQ-tRNA). The chain is S-adenosylmethionine:tRNA ribosyltransferase-isomerase from Francisella tularensis subsp. novicida (strain U112).